The primary structure comprises 90 residues: Envelope protein US9 homolog (90 aa).

At 1–63 (MEPLRLADAE…IRRRRRQTRA (63 aa)) the chain is on the intravirion side. The short motif at 12–13 (LL) is the Di-leucine internalization motif element. An acidic region spans residues 29–38 (EAYYTESDDE). A helical; Signal-anchor for type II membrane protein membrane pass occupies residues 64–84 (AGFVAAFVLVALISGGLGALM). The Virion surface portion of the chain corresponds to 85–90 (CWLAYR).

This sequence belongs to the alphaherpesvirinae envelope protein US9 family. Post-translationally, phosphorylated on serines within the acidic cluster. Phosphorylation determines whether endocytosed viral US9 traffics to the trans-Golgi network or recycles to the cell membrane.

The protein localises to the virion membrane. Its subcellular location is the host Golgi apparatus membrane. It localises to the host smooth endoplasmic reticulum membrane. It is found in the host cell membrane. Its function is as follows. Essential for the anterograde spread of the infection throughout the host nervous system. Together with the gE/gI heterodimer, US9 is involved in the sorting and transport of viral structural components toward axon tips. This Cercopithecine herpesvirus 1 (CeHV-1) protein is Envelope protein US9 homolog.